A 284-amino-acid chain; its full sequence is 4-diphosphocytidyl-2-C-methyl-D-erythritol kinase (284 aa).

Residue lysine 10 is part of the active site. 95 to 105 provides a ligand contact to ATP; that stretch reads PVAAGLGGGSS. Residue aspartate 137 is part of the active site.

Belongs to the GHMP kinase family. IspE subfamily.

The catalysed reaction is 4-CDP-2-C-methyl-D-erythritol + ATP = 4-CDP-2-C-methyl-D-erythritol 2-phosphate + ADP + H(+). Its pathway is isoprenoid biosynthesis; isopentenyl diphosphate biosynthesis via DXP pathway; isopentenyl diphosphate from 1-deoxy-D-xylulose 5-phosphate: step 3/6. Catalyzes the phosphorylation of the position 2 hydroxy group of 4-diphosphocytidyl-2C-methyl-D-erythritol. In Levilactobacillus brevis (strain ATCC 367 / BCRC 12310 / CIP 105137 / JCM 1170 / LMG 11437 / NCIMB 947 / NCTC 947) (Lactobacillus brevis), this protein is 4-diphosphocytidyl-2-C-methyl-D-erythritol kinase.